The primary structure comprises 550 residues: Carboxypeptidase Y homolog A (550 aa).

The first 18 residues, 1-18 (MKSLVLGLLVGSAIASGP), serve as a signal peptide directing secretion. The propeptide occupies 19-131 (LQHVLHAPPD…KLAQYDLRIK (113 aa)). The disordered stretch occupies residues 20-39 (QHVLHAPPDPEPKPEPEPQV). Intrachain disulfides connect Cys185–Cys424, Cys319–Cys333, Cys343–Cys366, Cys350–Cys359, and Cys388–Cys394. 2 N-linked (GlcNAc...) asparagine glycosylation sites follow: Asn203 and Asn216. Residue Ser272 is part of the active site. N-linked (GlcNAc...) asparagine glycosylation is present at Asn289. Asn387 is a glycosylation site (N-linked (GlcNAc...) asparagine). Asp463 is an active-site residue. 2 N-linked (GlcNAc...) asparagine glycosylation sites follow: Asn493 and Asn514. His525 is a catalytic residue.

The protein belongs to the peptidase S10 family.

Its subcellular location is the vacuole. It catalyses the reaction Release of a C-terminal amino acid with broad specificity.. Its function is as follows. Vacuolar carboxypeptidase involved in degradation of small peptides. Digests preferentially peptides containing an aliphatic or hydrophobic residue in P1' position, as well as methionine, leucine or phenylalanine in P1 position of ester substrate. The polypeptide is Carboxypeptidase Y homolog A (CPYA) (Paracoccidioides brasiliensis (strain Pb03)).